A 120-amino-acid polypeptide reads, in one-letter code: NADH-ubiquinone oxidoreductase chain 3 (120 aa).

Transmembrane regions (helical) follow at residues 10 to 30 (ILIL…LGYF), 62 to 82 (FYLV…LFPF), and 89 to 109 (MTLF…IGFI).

This sequence belongs to the complex I subunit 3 family.

Its subcellular location is the mitochondrion membrane. It carries out the reaction a ubiquinone + NADH + 5 H(+)(in) = a ubiquinol + NAD(+) + 4 H(+)(out). In terms of biological role, core subunit of the mitochondrial membrane respiratory chain NADH dehydrogenase (Complex I) that is believed to belong to the minimal assembly required for catalysis. Complex I functions in the transfer of electrons from NADH to the respiratory chain. The immediate electron acceptor for the enzyme is believed to be ubiquinone. The protein is NADH-ubiquinone oxidoreductase chain 3 (nad3) of Dictyostelium citrinum (Slime mold).